A 200-amino-acid chain; its full sequence is MIGHLRGIIVEKQPPYLLLEVAGVGYEITAPLSTFYHLPEPQEEILLYTHLIVREDAHTLYGFHNDHERRLFRALIKVNGVGPKLALAILSGIGPDEFVHCVLNQNIDQLVRIPGVGRKTAERLVIETKDRLSRWHTNDTPSPEGLRSSNTQPTQDAISALMALGYKPQEAKRAIDAIQKPDLSAETLIRLALKQMVLGT.

The interval 1-64 (MIGHLRGIIV…EDAHTLYGFH (64 aa)) is domain I. A domain II region spans residues 65 to 143 (NDHERRLFRA…RWHTNDTPSP (79 aa)). Residues 144-148 (EGLRS) form a flexible linker region. The interval 149-200 (SNTQPTQDAISALMALGYKPQEAKRAIDAIQKPDLSAETLIRLALKQMVLGT) is domain III.

The protein belongs to the RuvA family. As to quaternary structure, homotetramer. Forms an RuvA(8)-RuvB(12)-Holliday junction (HJ) complex. HJ DNA is sandwiched between 2 RuvA tetramers; dsDNA enters through RuvA and exits via RuvB. An RuvB hexamer assembles on each DNA strand where it exits the tetramer. Each RuvB hexamer is contacted by two RuvA subunits (via domain III) on 2 adjacent RuvB subunits; this complex drives branch migration. In the full resolvosome a probable DNA-RuvA(4)-RuvB(12)-RuvC(2) complex forms which resolves the HJ.

Its subcellular location is the cytoplasm. In terms of biological role, the RuvA-RuvB-RuvC complex processes Holliday junction (HJ) DNA during genetic recombination and DNA repair, while the RuvA-RuvB complex plays an important role in the rescue of blocked DNA replication forks via replication fork reversal (RFR). RuvA specifically binds to HJ cruciform DNA, conferring on it an open structure. The RuvB hexamer acts as an ATP-dependent pump, pulling dsDNA into and through the RuvAB complex. HJ branch migration allows RuvC to scan DNA until it finds its consensus sequence, where it cleaves and resolves the cruciform DNA. This Coxiella burnetii (strain CbuG_Q212) (Coxiella burnetii (strain Q212)) protein is Holliday junction branch migration complex subunit RuvA.